The sequence spans 661 residues: Junctophilin-1 (661 aa).

The Cytoplasmic portion of the chain corresponds to 1–639 (MTGGRFDFDD…EKEANSGPNS (639 aa)). MORN repeat units follow at residues 14-36 (YCGG…KGQG), 38-59 (YSGS…SGNT), 60-82 (YQGY…KWMY), 106-128 (YEGT…DGGT), and 129-151 (YQGQ…PYGM). Phosphoserine is present on residues S157, S216, and S220. The tract at residues 228–247 (SKSSISSKRSSVRSDAAMSR) is disordered. 2 MORN repeats span residues 281 to 303 (YMGE…NGMK) and 304 to 326 (YEGE…DGSK). Basic and acidic residues predominate over residues 433–454 (DAKENPEEKVPEKPPTPKESPH). A disordered region spans residues 433 to 631 (DAKENPEEKV…SNDSCPALEK (199 aa)). A Phosphothreonine modification is found at T448. At S452 the chain carries Phosphoserine. T461 carries the phosphothreonine modification. Phosphoserine occurs at positions 465, 469, and 475. The span at 599–613 (VAKESKAEPKAKKSE) shows a compositional bias: basic and acidic residues. Residues 640–660 (IMIVLVMLLNIGLAILFVHFL) traverse the membrane as a helical; Anchor for type IV membrane protein segment.

This sequence belongs to the junctophilin family. As to expression, abundantly expressed in skeletal muscle. Very low levels in heart.

It localises to the cell membrane. The protein resides in the endoplasmic reticulum membrane. The protein localises to the sarcoplasmic reticulum membrane. Junctophilins contribute to the formation of junctional membrane complexes (JMCs) which link the plasma membrane with the endoplasmic or sarcoplasmic reticulum in excitable cells. Provides a structural foundation for functional cross-talk between the cell surface and intracellular calcium release channels. JPH1 contributes to the construction of the skeletal muscle triad by linking the t-tubule (transverse-tubule) and SR (sarcoplasmic reticulum) membranes. In Homo sapiens (Human), this protein is Junctophilin-1 (JPH1).